Reading from the N-terminus, the 161-residue chain is S-ribosylhomocysteine lyase (161 aa).

H53, H57, and C124 together coordinate Fe cation.

The protein belongs to the LuxS family. As to quaternary structure, homodimer. Fe cation is required as a cofactor.

It catalyses the reaction S-(5-deoxy-D-ribos-5-yl)-L-homocysteine = (S)-4,5-dihydroxypentane-2,3-dione + L-homocysteine. Its function is as follows. Involved in the synthesis of autoinducer 2 (AI-2) which is secreted by bacteria and is used to communicate both the cell density and the metabolic potential of the environment. The regulation of gene expression in response to changes in cell density is called quorum sensing. Catalyzes the transformation of S-ribosylhomocysteine (RHC) to homocysteine (HC) and 4,5-dihydroxy-2,3-pentadione (DPD). In Phocaeicola vulgatus (strain ATCC 8482 / DSM 1447 / JCM 5826 / CCUG 4940 / NBRC 14291 / NCTC 11154) (Bacteroides vulgatus), this protein is S-ribosylhomocysteine lyase.